Here is a 125-residue protein sequence, read N- to C-terminus: Acyl carrier protein, mitochondrial (125 aa).

The transit peptide at 1–36 (MFRSVCRISSRVAPSAYRTIMGRSVMSNTILAQRFY) directs the protein to the mitochondrion. One can recognise a Carrier domain in the interval 43–122 (DQVSQRVIDV…ETVDYIASNP (80 aa)). An O-(pantetheine 4'-phosphoryl)serine modification is found at Ser-82.

Belongs to the acyl carrier protein (ACP) family. Complex I is composed of about 30 different subunits. Post-translationally, 4'-phosphopantetheine is transferred from CoA to a specific serine of apo-ACP by acpS. This modification is essential for activity because fatty acids are bound in thioester linkage to the sulfhydryl of the prosthetic group.

It localises to the mitochondrion. Its pathway is lipid metabolism; fatty acid biosynthesis. Carrier of the growing fatty acid chain in fatty acid biosynthesis. May be involved in the synthesis of very-long-chain fatty acids. Accessory and non-catalytic subunit of the mitochondrial membrane respiratory chain NADH dehydrogenase (Complex I), which functions in the transfer of electrons from NADH to the respiratory chain. This is Acyl carrier protein, mitochondrial (ACP1) from Saccharomyces cerevisiae (strain ATCC 204508 / S288c) (Baker's yeast).